Consider the following 562-residue polypeptide: Tissue-type plasminogen activator (562 aa).

An N-terminal signal peptide occupies residues 1 to 22 (MDAMKRGLCCVLLLCGAVFVSP). Residues 23 to 32 (SQEIHARFRR) constitute a propeptide that is removed on maturation. Positions 33-35 (GAR) are cleaved as a propeptide — removed by plasmin. Residues 39 to 81 (VICRDEKTQMIYQQHQSWLRPVLRSNRVEYCWCNSGRAQCHSV) form the Fibronectin type-I domain. Cystine bridges form between Cys41–Cys71, Cys69–Cys78, Cys86–Cys97, Cys91–Cys108, Cys110–Cys119, Cys127–Cys208, Cys148–Cys190, Cys179–Cys203, Cys215–Cys296, Cys236–Cys278, Cys267–Cys291, Cys299–Cys430, Cys342–Cys358, Cys350–Cys419, Cys444–Cys519, Cys476–Cys492, and Cys509–Cys537. The tract at residues 42 to 52 (RDEKTQMIYQQ) is important for binding to annexin A2. Residues 82–120 (PVKSCSEPRCFNGGTCQQALYFSDFVCQCPEGFAGKCCE) enclose the EGF-like domain. A glycan (O-linked (Fuc) threonine) is linked at Thr96. Kringle domains are found at residues 127–208 (CYED…TPAC) and 215–296 (CYFG…VPSC). An N-linked (GlcNAc...) asparagine glycan is attached at Asn152. N-linked (GlcNAc...) asparagine; partial glycosylation is present at Asn219. One can recognise a Peptidase S1 domain in the interval 311-561 (IKGGLFADIA…YLDWIRDNMR (251 aa)). Active-site charge relay system residues include His357 and Asp406. N-linked (GlcNAc...) asparagine glycosylation is present at Asn483. Ser513 (charge relay system) is an active-site residue.

Belongs to the peptidase S1 family. As to quaternary structure, heterodimer of chain A and chain B held by a disulfide bond. Forms a heterodimer with SERPINA5. Binds to fibrin with high affinity. This interaction leads to an increase in the catalytic efficiency of the enzyme between 100-fold and 1000-fold, due to an increase in affinity for plasminogen. Similarly, binding to heparin increases the activation of plasminogen. Binds to annexin A2, cytokeratin-8, fibronectin and laminin. Binds to mannose receptor and the low-density lipoprotein receptor-related protein (LRP1); these proteins are involved in TPA clearance. Yet unidentified interactions on endothelial cells and vascular smooth muscle cells (VSMC) lead to a 100-fold stimulation of plasminogen activation. In addition, binding to VSMC reduces TPA inhibition by PAI-1 by 30-fold. Binds LRP1B; binding is followed by internalization and degradation. Interacts with SERPINE1. In complex with SERPINE1, interacts with SORL1. Interacts with apyrase from Anopheles gambiae saliva; the interaction results in PLAT activation probably via an allosteric activation mechanism. The single chain, almost fully active enzyme, can be further processed into a two-chain fully active form by a cleavage after Arg-310 catalyzed by plasmin, tissue kallikrein or factor Xa. In terms of processing, differential cell-specific N-linked glycosylation gives rise to two glycoforms, type I (glycosylated at Asn-219) and type II (not glycosylated at Asn-219). The single chain type I glycoform is less readily converted into the two-chain form by plasmin, and the two-chain type I glycoform has a lower activity than the two-chain type II glycoform in the presence of fibrin. Post-translationally, N-glycosylation of Asn-152; the bound oligomannosidic glycan is involved in the interaction with the mannose receptor. Characterization of O-linked glycan was studied in Bowes melanoma cell line. Synthesized in numerous tissues (including tumors) and secreted into most extracellular body fluids, such as plasma, uterine fluid, saliva, gingival crevicular fluid, tears, seminal fluid, and milk.

The protein localises to the secreted. Its subcellular location is the extracellular space. The catalysed reaction is Specific cleavage of Arg-|-Val bond in plasminogen to form plasmin.. With respect to regulation, inhibited by SERPINA5. Inhibited by SERPINE1. Functionally, converts the abundant, but inactive, zymogen plasminogen to plasmin by hydrolyzing a single Arg-Val bond in plasminogen. By controlling plasmin-mediated proteolysis, it plays an important role in tissue remodeling and degradation, in cell migration and many other physiopathological events. During oocyte activation, plays a role in cortical granule reaction in the zona reaction, which contributes to the block to polyspermy. The protein is Tissue-type plasminogen activator of Homo sapiens (Human).